Consider the following 622-residue polypeptide: Probable potassium transport system protein Kup (622 aa).

12 helical membrane passes run 8–28, 50–70, 101–121, 137–157, 165–185, 213–233, 247–267, 285–305, 337–357, 366–386, 393–413, and 419–439; these read LAVL…TSVL, ILSI…VSLV, VLLL…VITP, PTFT…LFAM, IGKF…LLGV, ITFI…ALYA, WFSV…ALLL, ALIP…QALI, IYMP…VVMF, AYGI…FYVI, PLAL…AFFA, and LFAG…LMIT.

Belongs to the HAK/KUP transporter (TC 2.A.72) family.

It is found in the cell inner membrane. It catalyses the reaction K(+)(in) + H(+)(in) = K(+)(out) + H(+)(out). In terms of biological role, transport of potassium into the cell. Likely operates as a K(+):H(+) symporter. This is Probable potassium transport system protein Kup from Polaromonas naphthalenivorans (strain CJ2).